The following is a 168-amino-acid chain: Crossover junction endodeoxyribonuclease RuvC (168 aa).

Residues D9, E70, and D145 contribute to the active site. Mg(2+) contacts are provided by D9, E70, and D145.

It belongs to the RuvC family. In terms of assembly, homodimer which binds Holliday junction (HJ) DNA. The HJ becomes 2-fold symmetrical on binding to RuvC with unstacked arms; it has a different conformation from HJ DNA in complex with RuvA. In the full resolvosome a probable DNA-RuvA(4)-RuvB(12)-RuvC(2) complex forms which resolves the HJ. Requires Mg(2+) as cofactor.

The protein resides in the cytoplasm. It catalyses the reaction Endonucleolytic cleavage at a junction such as a reciprocal single-stranded crossover between two homologous DNA duplexes (Holliday junction).. Its function is as follows. The RuvA-RuvB-RuvC complex processes Holliday junction (HJ) DNA during genetic recombination and DNA repair. Endonuclease that resolves HJ intermediates. Cleaves cruciform DNA by making single-stranded nicks across the HJ at symmetrical positions within the homologous arms, yielding a 5'-phosphate and a 3'-hydroxyl group; requires a central core of homology in the junction. The consensus cleavage sequence is 5'-(A/T)TT(C/G)-3'. Cleavage occurs on the 3'-side of the TT dinucleotide at the point of strand exchange. HJ branch migration catalyzed by RuvA-RuvB allows RuvC to scan DNA until it finds its consensus sequence, where it cleaves and resolves the cruciform DNA. The chain is Crossover junction endodeoxyribonuclease RuvC from Chlamydia pneumoniae (Chlamydophila pneumoniae).